A 229-amino-acid polypeptide reads, in one-letter code: Flagellar L-ring protein (229 aa).

An N-terminal signal peptide occupies residues 1-25; sequence MKQVRLLPSATVRAACAVAVAALAG. Cysteine 26 is lipidated: N-palmitoyl cysteine. Cysteine 26 carries S-diacylglycerol cysteine lipidation.

It belongs to the FlgH family. In terms of assembly, the basal body constitutes a major portion of the flagellar organelle and consists of four rings (L,P,S, and M) mounted on a central rod.

Its subcellular location is the cell outer membrane. The protein localises to the bacterial flagellum basal body. In terms of biological role, assembles around the rod to form the L-ring and probably protects the motor/basal body from shearing forces during rotation. This is Flagellar L-ring protein from Burkholderia vietnamiensis (strain G4 / LMG 22486) (Burkholderia cepacia (strain R1808)).